We begin with the raw amino-acid sequence, 460 residues long: Bifunctional protein GlmU (460 aa).

Residues 1–232 (MAISAALILA…PDEIMGVNDR (232 aa)) form a pyrophosphorylase region. UDP-N-acetyl-alpha-D-glucosamine contacts are provided by residues 9 to 12 (LAAG), K23, Q75, and 80 to 81 (GT). Residue D105 participates in Mg(2+) binding. UDP-N-acetyl-alpha-D-glucosamine is bound by residues G142, E157, N172, and N230. N230 lines the Mg(2+) pocket. Positions 233 to 253 (VQLAHAARVLRQRVNLQLMLA) are linker. The N-acetyltransferase stretch occupies residues 254 to 460 (GVTLIDPDQT…GWCLKKRDNG (207 aa)). Residues R336 and K354 each contribute to the UDP-N-acetyl-alpha-D-glucosamine site. The active-site Proton acceptor is H366. 2 residues coordinate UDP-N-acetyl-alpha-D-glucosamine: Y369 and N380. Residues 389-390 (NY), S408, A426, and R443 each bind acetyl-CoA.

In the N-terminal section; belongs to the N-acetylglucosamine-1-phosphate uridyltransferase family. This sequence in the C-terminal section; belongs to the transferase hexapeptide repeat family. Homotrimer. Mg(2+) is required as a cofactor.

It localises to the cytoplasm. The catalysed reaction is alpha-D-glucosamine 1-phosphate + acetyl-CoA = N-acetyl-alpha-D-glucosamine 1-phosphate + CoA + H(+). It catalyses the reaction N-acetyl-alpha-D-glucosamine 1-phosphate + UTP + H(+) = UDP-N-acetyl-alpha-D-glucosamine + diphosphate. It functions in the pathway nucleotide-sugar biosynthesis; UDP-N-acetyl-alpha-D-glucosamine biosynthesis; N-acetyl-alpha-D-glucosamine 1-phosphate from alpha-D-glucosamine 6-phosphate (route II): step 2/2. It participates in nucleotide-sugar biosynthesis; UDP-N-acetyl-alpha-D-glucosamine biosynthesis; UDP-N-acetyl-alpha-D-glucosamine from N-acetyl-alpha-D-glucosamine 1-phosphate: step 1/1. The protein operates within bacterial outer membrane biogenesis; LPS lipid A biosynthesis. Its function is as follows. Catalyzes the last two sequential reactions in the de novo biosynthetic pathway for UDP-N-acetylglucosamine (UDP-GlcNAc). The C-terminal domain catalyzes the transfer of acetyl group from acetyl coenzyme A to glucosamine-1-phosphate (GlcN-1-P) to produce N-acetylglucosamine-1-phosphate (GlcNAc-1-P), which is converted into UDP-GlcNAc by the transfer of uridine 5-monophosphate (from uridine 5-triphosphate), a reaction catalyzed by the N-terminal domain. The chain is Bifunctional protein GlmU from Trichlorobacter lovleyi (strain ATCC BAA-1151 / DSM 17278 / SZ) (Geobacter lovleyi).